A 507-amino-acid polypeptide reads, in one-letter code: Transcription factor SOX-9 (507 aa).

Disordered stretches follow at residues 1 to 67 (MNLL…SEED) and 160 to 250 (RLRV…AGKV). Positions 30 to 41 (SAGSPCPSGSGS) are enriched in low complexity. Polar residues predominate over residues 42–52 (DTENTRPQENT). Composition is skewed to basic and acidic residues over residues 56–67 (GEPDLKKESEED) and 160–174 (RLRV…DYKY). A dimerization (DIM) region spans residues 63-103 (ESEEDKFPVCIREAVSQVLKGYDWTLVPMPVRVNGSSKNKP). The PQA stretch occupies residues 63–103 (ESEEDKFPVCIREAVSQVLKGYDWTLVPMPVRVNGSSKNKP). Serine 64 is subject to Phosphoserine. The segment at residues 105–173 (VKRPMNAFMV…QHKKDHPDYK (69 aa)) is a DNA-binding region (HMG box). Position 211 is a phosphoserine (serine 211). The segment at 224–307 (PGEHSGQSQG…LPPNGHPGVP (84 aa)) is transactivation domain (TAM). 2 consecutive short sequence motifs (9aaTAD) follow at residues 275-284 (IGELSSDVIS) and 290-298 (DVNEFDQYL). A disordered region spans residues 335–429 (WMSKQQAPPP…PFNLPHYNPS (95 aa)). Positions 341–369 (APPPPPQQPPQAPQAPQAPPQQQAPPQPQ) are enriched in pro residues. The segment covering 378-420 (HTLTTLSSEPGQSQRTHIKTEQLSPSHYSEQQQHSPQQISYSP) has biased composition (polar residues). The tract at residues 392-507 (RTHIKTEQLS…QPVYTQLTRP (116 aa)) is transactivation domain (TAC). Lysine 396 is covalently cross-linked (Glycyl lysine isopeptide (Lys-Gly) (interchain with G-Cter in ubiquitin)). The 9aaTAD 3 motif lies at 458 to 466 (SGLYSTFTY). The segment at 477-507 (PIADTSGVPSIPQTHSPQHWEQPVYTQLTRP) is disordered. Polar residues predominate over residues 483-507 (GVPSIPQTHSPQHWEQPVYTQLTRP).

As to quaternary structure, homodimer; homodimerization is required for activity. Interacts (via C-terminus) with ZNF219; forming a complex that binds to the COL2A1 promoter and activates COL2A1 expression. Interacts with DDRGK1. Interacts with EP300/p300. Interacts with beta-catenin (CTNNB1); inhibiting CTNNB1 activity by competing with the binding sites of TCF/LEF within CTNNB1. Acetylated; acetylation impairs nuclear localization and ability to transactivate expression of target genes. Deacetylated by SIRT1. Post-translationally, phosphorylation at Ser-64 and Ser-211 by PKA increases transcriptional activity and may help delay chondrocyte maturation downstream of PTHLH/PTHrP signaling. Phosphorylation at either Ser-64 or Ser-211 is required for sumoylation, but phosphorylation is not dependent on sumoylation. Phosphorylated on tyrosine residues; tyrosine dephosphorylation by PTPN11/SHP2 blocks SOX9 phosphorylation by PKA and subsequent SUMOylation. In terms of processing, sumoylated; phosphorylation at either Ser-64 or Ser-211 is required for sumoylation. Sumoylation is induced by BMP signaling pathway. Ubiquitinated; ubiquitination leads to proteasomal degradation and is negatively regulated by DDRGK1.

It is found in the nucleus. In terms of biological role, transcription factor that plays a key role in chondrocytes differentiation and skeletal development. Specifically binds the 5'-ACAAAG-3' DNA motif present in enhancers and super-enhancers and promotes expression of genes important for chondrogenesis, including cartilage matrix protein-coding genes COL2A1, COL4A2, COL9A1, COL11A2 and ACAN, SOX5 and SOX6. Also binds to some promoter regions. Plays a central role in successive steps of chondrocyte differentiation. Absolutely required for precartilaginous condensation, the first step in chondrogenesis during which skeletal progenitors differentiate into prechondrocytes. Together with SOX5 and SOX6, required for overt chondrogenesis when condensed prechondrocytes differentiate into early stage chondrocytes, the second step in chondrogenesis. Later, required to direct hypertrophic maturation and block osteoblast differentiation of growth plate chondrocytes: maintains chondrocyte columnar proliferation, delays prehypertrophy and then prevents osteoblastic differentiation of chondrocytes by lowering beta-catenin (CTNNB1) signaling and RUNX2 expression. Also required for chondrocyte hypertrophy, both indirectly, by keeping the lineage fate of chondrocytes, and directly, by remaining present in upper hypertrophic cells and transactivating COL10A1 along with MEF2C. Low lipid levels are the main nutritional determinant for chondrogenic commitment of skeletal progenitor cells: when lipids levels are low, FOXO (FOXO1 and FOXO3) transcription factors promote expression of SOX9, which induces chondrogenic commitment and suppresses fatty acid oxidation. Mechanistically, helps, but is not required, to remove epigenetic signatures of transcriptional repression and deposit active promoter and enhancer marks at chondrocyte-specific genes. Acts in cooperation with the Hedgehog pathway-dependent GLI (GLI1 and GLI3) transcription factors. In addition to cartilage development, also acts as a regulator of proliferation and differentiation in epithelial stem/progenitor cells: involved in the lung epithelium during branching morphogenesis, by balancing proliferation and differentiation and regulating the extracellular matrix. Controls epithelial branching during kidney development. This is Transcription factor SOX-9 from Rattus norvegicus (Rat).